The following is a 97-amino-acid chain: MAVLTGLTFGGNTWTPKFAESIDKDKCIGCGRCIKVCGYPVLDLKALNEEGEFVEDEEDDEIERKVMVVAHPENCIGCQACARICPKNCYTHNPLEN.

4Fe-4S ferredoxin-type domains lie at 18–47 and 65–95; these read FAES…LKAL and KVMV…HNPL. [4Fe-4S] cluster contacts are provided by cysteine 27, cysteine 30, cysteine 33, cysteine 37, cysteine 75, cysteine 78, cysteine 81, and cysteine 85.

Homodimer. [4Fe-4S] cluster is required as a cofactor.

Ferredoxins are iron-sulfur proteins that transfer electrons in a wide variety of metabolic reactions. This is Ferredoxin-3 (fdxB) from Nostoc sp. (strain PCC 7120 / SAG 25.82 / UTEX 2576).